Reading from the N-terminus, the 446-residue chain is Probable D-serine dehydratase (446 aa).

At lysine 116 the chain carries N6-(pyridoxal phosphate)lysine.

The protein belongs to the serine/threonine dehydratase family. DsdA subfamily. The cofactor is pyridoxal 5'-phosphate.

It carries out the reaction D-serine = pyruvate + NH4(+). The protein is Probable D-serine dehydratase of Bacillus thuringiensis subsp. konkukian (strain 97-27).